We begin with the raw amino-acid sequence, 386 residues long: Chaperone protein DnaJ (386 aa).

The region spanning 6–71 (DYYEILGVDR…QKRARYDQFG (66 aa)) is the J domain. The CR-type zinc finger occupies 144-226 (GTEKEVTVSR…CGGKGRVRKH (83 aa)). Residues cysteine 157, cysteine 160, cysteine 174, cysteine 177, cysteine 200, cysteine 203, cysteine 214, and cysteine 217 each contribute to the Zn(2+) site. 4 CXXCXGXG motif repeats span residues 157–164 (CPTCSGSG), 174–181 (CRQCNGTG), 200–207 (CDVCHGEG), and 214–221 (CETCGGKG).

Belongs to the DnaJ family. Homodimer. Zn(2+) is required as a cofactor.

Its subcellular location is the cytoplasm. Participates actively in the response to hyperosmotic and heat shock by preventing the aggregation of stress-denatured proteins and by disaggregating proteins, also in an autonomous, DnaK-independent fashion. Unfolded proteins bind initially to DnaJ; upon interaction with the DnaJ-bound protein, DnaK hydrolyzes its bound ATP, resulting in the formation of a stable complex. GrpE releases ADP from DnaK; ATP binding to DnaK triggers the release of the substrate protein, thus completing the reaction cycle. Several rounds of ATP-dependent interactions between DnaJ, DnaK and GrpE are required for fully efficient folding. Also involved, together with DnaK and GrpE, in the DNA replication of plasmids through activation of initiation proteins. In Acetivibrio thermocellus (strain ATCC 27405 / DSM 1237 / JCM 9322 / NBRC 103400 / NCIMB 10682 / NRRL B-4536 / VPI 7372) (Clostridium thermocellum), this protein is Chaperone protein DnaJ.